A 192-amino-acid chain; its full sequence is Ribosomal RNA small subunit methyltransferase G (192 aa).

S-adenosyl-L-methionine contacts are provided by residues G59, 111–112, and R124; that span reads IE.

The protein belongs to the methyltransferase superfamily. RNA methyltransferase RsmG family.

It localises to the cytoplasm. Functionally, specifically methylates the N7 position of a guanine in 16S rRNA. This is Ribosomal RNA small subunit methyltransferase G from Mycoplasma genitalium (strain ATCC 33530 / DSM 19775 / NCTC 10195 / G37) (Mycoplasmoides genitalium).